The sequence spans 210 residues: Large ribosomal subunit protein uL3 (210 aa).

Belongs to the universal ribosomal protein uL3 family. Part of the 50S ribosomal subunit. Forms a cluster with proteins L14 and L19.

Functionally, one of the primary rRNA binding proteins, it binds directly near the 3'-end of the 23S rRNA, where it nucleates assembly of the 50S subunit. This is Large ribosomal subunit protein uL3 from Pseudothermotoga lettingae (strain ATCC BAA-301 / DSM 14385 / NBRC 107922 / TMO) (Thermotoga lettingae).